Reading from the N-terminus, the 515-residue chain is Sterol 14-alpha demethylase cyp51A (515 aa).

Residues 7–29 form a helical membrane-spanning segment; that stretch reads LTAYMAVAVLTAILLNVVYQLFF. Residues Asn-33 and Asn-269 are each glycosylated (N-linked (GlcNAc...) asparagine). A heme-binding site is contributed by Cys-454. A glycan (N-linked (GlcNAc...) asparagine) is linked at Asn-512.

Belongs to the cytochrome P450 family. Heme is required as a cofactor.

The protein resides in the endoplasmic reticulum membrane. The catalysed reaction is a 14alpha-methyl steroid + 3 reduced [NADPH--hemoprotein reductase] + 3 O2 = a Delta(14) steroid + formate + 3 oxidized [NADPH--hemoprotein reductase] + 4 H2O + 4 H(+). It carries out the reaction a 14alpha-methyl steroid + reduced [NADPH--hemoprotein reductase] + O2 = a 14alpha-hydroxymethyl steroid + oxidized [NADPH--hemoprotein reductase] + H2O + H(+). The enzyme catalyses a 14alpha-hydroxymethyl steroid + reduced [NADPH--hemoprotein reductase] + O2 = a 14alpha-formyl steroid + oxidized [NADPH--hemoprotein reductase] + 2 H2O + H(+). It catalyses the reaction a 14alpha-formyl steroid + reduced [NADPH--hemoprotein reductase] + O2 = a Delta(14) steroid + formate + oxidized [NADPH--hemoprotein reductase] + H2O + 2 H(+). The catalysed reaction is lanosterol + 3 reduced [NADPH--hemoprotein reductase] + 3 O2 = 4,4-dimethyl-5alpha-cholesta-8,14,24-trien-3beta-ol + formate + 3 oxidized [NADPH--hemoprotein reductase] + 4 H2O + 4 H(+). It carries out the reaction lanosterol + reduced [NADPH--hemoprotein reductase] + O2 = 32-hydroxylanosterol + oxidized [NADPH--hemoprotein reductase] + H2O + H(+). The enzyme catalyses 32-hydroxylanosterol + reduced [NADPH--hemoprotein reductase] + O2 = 32-oxolanosterol + oxidized [NADPH--hemoprotein reductase] + 2 H2O + H(+). It catalyses the reaction 32-oxolanosterol + reduced [NADPH--hemoprotein reductase] + O2 = 4,4-dimethyl-5alpha-cholesta-8,14,24-trien-3beta-ol + formate + oxidized [NADPH--hemoprotein reductase] + H2O + 2 H(+). The catalysed reaction is eburicol + 3 reduced [NADPH--hemoprotein reductase] + 3 O2 = 14-demethyleburicol + formate + 3 oxidized [NADPH--hemoprotein reductase] + 4 H2O + 4 H(+). It carries out the reaction eburicol + reduced [NADPH--hemoprotein reductase] + O2 = 32-hydroxyeburicol + oxidized [NADPH--hemoprotein reductase] + H2O + H(+). The enzyme catalyses 32-hydroxyeburicol + reduced [NADPH--hemoprotein reductase] + O2 = 32-oxoeburicol + oxidized [NADPH--hemoprotein reductase] + 2 H2O + H(+). It catalyses the reaction 32-oxoeburicol + reduced [NADPH--hemoprotein reductase] + O2 = 14-demethyleburicol + formate + oxidized [NADPH--hemoprotein reductase] + H2O + 2 H(+). It participates in steroid metabolism; ergosterol biosynthesis. With respect to regulation, the sterol 14-alpha demethylase activity is inhibited by azole compounds. Activity is inhibited by the novel and long-acting fungicidal azole, PC1244. Sterol 14alpha-demethylase, encoded by cyp51A and cyp51B, that plays a critical role in the third module of ergosterol biosynthesis pathway, being ergosterol the major sterol component in fungal membranes that participates in a variety of functions. The third module or late pathway involves the ergosterol synthesis itself through consecutive reactions that mainly occur in the endoplasmic reticulum (ER) membrane. In filamentous fungi, during the initial step of this module, lanosterol (lanosta-8,24-dien-3beta-ol) can be metabolized to eburicol. Sterol 14alpha-demethylase catalyzes the three-step oxidative removal of the 14alpha-methyl group (C-32) of both these sterols in the form of formate, and converts eburicol and lanosterol to 14-demethyleburicol (4,4,24-trimethylergosta-8,14,24(28)-trienol) and 4,4-dimethyl-5alpha-cholesta-8,14,24-trien-3beta-ol, respectively, which are further metabolized by other enzymes in the pathway to ergosterol. Can also use substrates not intrinsic to fungi, such as 24,25-dihydrolanosterol (DHL), producing 4,4'-dimethyl-8,14-cholestadien-3-beta-ol, but at lower rates than the endogenous substrates. Its function is as follows. As a target of azole drugs, plays a crucial role in azole susceptibility. In Aspergillus fumigatus (strain ATCC MYA-4609 / CBS 101355 / FGSC A1100 / Af293) (Neosartorya fumigata), this protein is Sterol 14-alpha demethylase cyp51A.